Consider the following 162-residue polypeptide: Inorganic pyrophosphatase (162 aa).

Glu-8 contributes to the Mg(2+) binding site. The substrate site is built by Lys-16, Arg-30, and Tyr-42. Mg(2+) is bound by residues Asp-52, Asp-57, Asp-84, and Asp-89. The active-site Proton acceptor is Asp-89. Tyr-126 contacts substrate.

This sequence belongs to the PPase family. In terms of assembly, homohexamer. Mg(2+) is required as a cofactor.

The protein resides in the cytoplasm. It catalyses the reaction diphosphate + H2O = 2 phosphate + H(+). Its function is as follows. Catalyzes the hydrolysis of inorganic pyrophosphate (PPi) forming two phosphate ions. This chain is Inorganic pyrophosphatase, found in Mycobacterium leprae (strain TN).